Reading from the N-terminus, the 210-residue chain is HTH-type transcriptional repressor ComR (210 aa).

Positions 18–78 (VFDRDAALDK…AVLDRYIDRF (61 aa)) constitute an HTH tetR-type domain. A DNA-binding region (H-T-H motif) is located at residues 41-60 (SLADLVEATGAKAPTLYAEF).

With respect to regulation, binding to the promoter region of BhsA/ComC is released in the presence of copper. In terms of biological role, represses expression of BhsA/ComC by binding to its promoter region in the absence of copper. This chain is HTH-type transcriptional repressor ComR (comR), found in Escherichia coli (strain K12).